Reading from the N-terminus, the 60-residue chain is Large ribosomal subunit protein bL32 (60 aa).

Residues 1 to 23 (MAKHPVPKKKTSKSKRDMRRSHH) show a composition bias toward basic residues. The interval 1-26 (MAKHPVPKKKTSKSKRDMRRSHHALT) is disordered.

The protein belongs to the bacterial ribosomal protein bL32 family.

This chain is Large ribosomal subunit protein bL32, found in Deinococcus deserti (strain DSM 17065 / CIP 109153 / LMG 22923 / VCD115).